The chain runs to 494 residues: 3-octaprenyl-4-hydroxybenzoate carboxy-lyase (494 aa).

Asn172 provides a ligand contact to Mn(2+). Residues 175 to 177 (IYR), 189 to 191 (RWL), and 194 to 195 (RG) contribute to the prenylated FMN site. Glu238 contacts Mn(2+). Asp287 functions as the Proton donor in the catalytic mechanism.

The protein belongs to the UbiD family. As to quaternary structure, homohexamer. It depends on prenylated FMN as a cofactor. The cofactor is Mn(2+).

The protein localises to the cell membrane. It catalyses the reaction a 4-hydroxy-3-(all-trans-polyprenyl)benzoate + H(+) = a 2-(all-trans-polyprenyl)phenol + CO2. Its pathway is cofactor biosynthesis; ubiquinone biosynthesis. In terms of biological role, catalyzes the decarboxylation of 3-octaprenyl-4-hydroxy benzoate to 2-octaprenylphenol, an intermediate step in ubiquinone biosynthesis. The sequence is that of 3-octaprenyl-4-hydroxybenzoate carboxy-lyase from Erwinia tasmaniensis (strain DSM 17950 / CFBP 7177 / CIP 109463 / NCPPB 4357 / Et1/99).